A 117-amino-acid chain; its full sequence is Large ribosomal subunit protein bL19 (117 aa).

It belongs to the bacterial ribosomal protein bL19 family.

Functionally, this protein is located at the 30S-50S ribosomal subunit interface and may play a role in the structure and function of the aminoacyl-tRNA binding site. The protein is Large ribosomal subunit protein bL19 of Vesicomyosocius okutanii subsp. Calyptogena okutanii (strain HA).